We begin with the raw amino-acid sequence, 196 residues long: MIKQASFITSAANKSNWINDDVSEICLIGRSNVGKSSFINSLTNNNKLAKISNTPGKTRLLNFFEINKGEYRLVDAPGYGYAKVDDSIKIQFAKMMEEYFINRKNLKGVFLLLDLRHKPSNDDIMMYQFLKHYNIPVVIIGTKLDKLKKNEYIKNEKMIKEAINFYQEDDFIKISNLNKTNIIKCYELINKLLGSK.

One can recognise an EngB-type G domain in the interval 21-195 (DVSEICLIGR…YELINKLLGS (175 aa)). Residues 29–36 (GRSNVGKS), 56–60 (GKTRL), 75–78 (DAPG), 142–145 (TKLD), and 174–176 (ISN) contribute to the GTP site. Residues Ser-36 and Thr-58 each coordinate Mg(2+).

This sequence belongs to the TRAFAC class TrmE-Era-EngA-EngB-Septin-like GTPase superfamily. EngB GTPase family. It depends on Mg(2+) as a cofactor.

Its function is as follows. Necessary for normal cell division and for the maintenance of normal septation. The sequence is that of Probable GTP-binding protein EngB from Mycoplasma capricolum subsp. capricolum (strain California kid / ATCC 27343 / NCTC 10154).